A 498-amino-acid polypeptide reads, in one-letter code: MRINPTTSGPGVSTLEEKNLGRIAQIIGPVLDVAFPPGKMPNIYNALIVKGRDTVDQQINVTCEVQQLLGNNRVRAVAMSATDGLTRGMEVIDTGAPLSVPVGGATLGRIFNVLGEPIDNLGPADTRTTSPIHRSAPAFIQLDTKLSIFETGIKVVDLLAPYRRGGKIGLFGGAGVGKTVLIMELINNIAKAHGGVSVFGGVGERTREGNDLYMEMKESGVINEENIAESKVALVYGQMNEPPGARMRVGLTALTMAEYFRDVNEQDVLLFIDNIFRFVQAGSEVSALLGRMPSAVGYQPTLSTEMGSLQERITSTKEGSITSIQAVYVPADDLTDPAPATTFAHLDATTVLSRGLAAKGIYPAVDPLDSTSTMLQPRIVGEEHYETAQRVKQTSQRYKELQDIIAILGLDELSEEDRLTVARARKIERFLSQPFFVAEVFTGSPGKYVGLAETIRGFQLILSGELDGLPEQAFYLVGNIDEATAKAMNLDVESKLKK.

172–179 (GGAGVGKT) is an ATP binding site.

Belongs to the ATPase alpha/beta chains family. In terms of assembly, F-type ATPases have 2 components, CF(1) - the catalytic core - and CF(0) - the membrane proton channel. CF(1) has five subunits: alpha(3), beta(3), gamma(1), delta(1), epsilon(1). CF(0) has four main subunits: a(1), b(1), b'(1) and c(9-12).

The protein localises to the plastid. It is found in the chloroplast thylakoid membrane. It carries out the reaction ATP + H2O + 4 H(+)(in) = ADP + phosphate + 5 H(+)(out). Functionally, produces ATP from ADP in the presence of a proton gradient across the membrane. The catalytic sites are hosted primarily by the beta subunits. This is ATP synthase subunit beta, chloroplastic from Canella winterana (Wild cinnamon).